The chain runs to 592 residues: Protein US23 (592 aa).

Residues Pro407–Arg491 are disordered. Residues Ala460–Glu481 are compositionally biased toward acidic residues.

The protein belongs to the herpesviridae US22 family.

It is found in the virion tegument. This Homo sapiens (Human) protein is Protein US23 (US23).